A 137-amino-acid chain; its full sequence is Regulator of cell cycle RGCC (137 aa).

Disordered regions lie at residues 1–20 (MKPPAAQGSPAAAAAAAPAL) and 57–80 (LERMKRRSSASVSDSSGFSDSESA). The segment covering 65–80 (SASVSDSSGFSDSESA) has biased composition (low complexity). Phosphoserine is present on residues S67, S69, S71, S75, S91, and S97. Phosphothreonine; by CDK1 is present on T111.

Interacts with SMAD3. Interacts with CDK1 and PLK1. In terms of tissue distribution, detected in brain, heart and liver (at protein level). Highly expressed in liver, skeletal muscle, kidney and pancreas. Detected at lower levels in heart, brain and placenta. Detected in aorta endothelial cells. Overexpressed in colon, breast, prostate, bladder, lung, and ovarian cancer tissues.

It is found in the cytoplasm. It localises to the nucleus. The protein resides in the cytoskeleton. The protein localises to the microtubule organizing center. Its subcellular location is the centrosome. Functionally, modulates the activity of cell cycle-specific kinases. Enhances CDK1 activity. May contribute to the regulation of the cell cycle. May inhibit growth of glioma cells by promoting arrest of mitotic progression at the G2/M transition. Fibrogenic factor contributing to the pathogenesis of renal fibrosis through fibroblast activation. The polypeptide is Regulator of cell cycle RGCC (RGCC) (Homo sapiens (Human)).